We begin with the raw amino-acid sequence, 857 residues long: Aminopeptidase N (857 aa).

Substrate is bound by residues glutamate 130 and glycine 264–asparagine 268. Residue histidine 298 coordinates Zn(2+). Residue glutamate 299 is the Proton acceptor of the active site. Residues histidine 302 and glutamate 321 each coordinate Zn(2+).

The protein belongs to the peptidase M1 family. In terms of assembly, monomer. Zn(2+) serves as cofactor. The N-terminus is blocked.

Its subcellular location is the cytoplasm. The catalysed reaction is Release of an N-terminal amino acid, Xaa-|-Yaa- from a peptide, amide or arylamide. Xaa is preferably Ala, but may be most amino acids including Pro (slow action). When a terminal hydrophobic residue is followed by a prolyl residue, the two may be released as an intact Xaa-Pro dipeptide.. Its function is as follows. Aminopeptidase with broad substrate specificity to several peptides. Shows strong preference for leucine but also cleaves next to Arg and Lys in peptide-bond-containing substrates. This chain is Aminopeptidase N (pepN), found in Streptomyces lividans.